A 515-amino-acid chain; its full sequence is Phenylalanine--tRNA ligase beta subunit (515 aa).

The region spanning 263 to 334 (HEYVKIYVDE…IVMGYNQMPR (72 aa)) is the B5 domain. Positions 312, 318, 321, and 322 each coordinate Mg(2+).

It belongs to the phenylalanyl-tRNA synthetase beta subunit family. Type 2 subfamily. As to quaternary structure, tetramer of two alpha and two beta subunits. Mg(2+) serves as cofactor.

The protein localises to the cytoplasm. It carries out the reaction tRNA(Phe) + L-phenylalanine + ATP = L-phenylalanyl-tRNA(Phe) + AMP + diphosphate + H(+). This chain is Phenylalanine--tRNA ligase beta subunit, found in Pyrobaculum aerophilum (strain ATCC 51768 / DSM 7523 / JCM 9630 / CIP 104966 / NBRC 100827 / IM2).